A 572-amino-acid chain; its full sequence is MQGPLYIGFDLSTQQLKALVVNSDLKVVYVSKFDFDADSRGFPIKKGVITNEAEHEVYAPVALWLQALDGVLEGLKKQGLDFARVKGISGAGQQHGSVYWGQDAERLLKELDSGKSLEDQLSGAFSHPYSPNWQDSSTQKECDEFDAFLGGADKLANATGSKAHHRFTGPQILRFQRKYPEVYKKTSRISLVSSFLASLFLGHIAPLDTSDVCGMNLWNIKQGAYDEKLLQLCAGPSGVEDLKRKLGAVPEDGGINLGQIDRYYIERYGFSSDCTIIPATGDNPATILALPLRPSDAMVSLGTSTTFLMSTPNYMPDPATHFFNHPTTAGLYMFMLCYKNGGLAREHIRDAINDKLGMAGDKDPWANFDKITLETAPMGQKKDSDPMKMGLFFPRPEIVPNLRAGQWRFDYNPADGSLHETNGGWNKPADEARAIVESQFLSLRLRSRGLTASPGQGMPAQPRRVYLVGGGSKNKAIAKVAGEILGGSDGVYKLEIGDNACALGAAYKAVWALERKDGQTFEDLIGQRWREEDFIEKIADGYQKGVFEKYGAALEGFEKMELQVLKQEGETR.

Substrate is bound by residues H95, R166, D282, and N283. Residues W365, 470–471 (GG), and N474 each bind ATP.

This sequence belongs to the FGGY kinase family.

It is found in the cytoplasm. It carries out the reaction D-xylulose + ATP = D-xylulose 5-phosphate + ADP + H(+). Highly specific D-xylulose kinase which participates in the catabolism of xylose. Xylose is a major component of hemicelluloses such as xylan. Most fungi utilize D-xylose via three enzymatic reactions, xylose reductase (XR), xylitol dehydrogenase (XDH), and xylulokinase, to form xylulose 5-phosphate, which enters pentose phosphate pathway. In Aspergillus oryzae (strain ATCC 42149 / RIB 40) (Yellow koji mold), this protein is Probable D-xylulose kinase A (xkiA).